The sequence spans 386 residues: Succinate--CoA ligase [ADP-forming] subunit beta (386 aa).

The 236-residue stretch at 9–244 (KEILRSYGVS…LDEEDPKEVE (236 aa)) folds into the ATP-grasp domain. ATP is bound by residues Lys-46, 53–55 (GRG), Glu-99, Cys-102, and Glu-107. The Mg(2+) site is built by Asn-199 and Asp-213. Residues Asn-264 and 321–323 (GIM) each bind substrate.

It belongs to the succinate/malate CoA ligase beta subunit family. Heterotetramer of two alpha and two beta subunits. Requires Mg(2+) as cofactor.

It carries out the reaction succinate + ATP + CoA = succinyl-CoA + ADP + phosphate. The enzyme catalyses GTP + succinate + CoA = succinyl-CoA + GDP + phosphate. The protein operates within carbohydrate metabolism; tricarboxylic acid cycle; succinate from succinyl-CoA (ligase route): step 1/1. Functionally, succinyl-CoA synthetase functions in the citric acid cycle (TCA), coupling the hydrolysis of succinyl-CoA to the synthesis of either ATP or GTP and thus represents the only step of substrate-level phosphorylation in the TCA. The beta subunit provides nucleotide specificity of the enzyme and binds the substrate succinate, while the binding sites for coenzyme A and phosphate are found in the alpha subunit. The sequence is that of Succinate--CoA ligase [ADP-forming] subunit beta from Geobacillus kaustophilus (strain HTA426).